We begin with the raw amino-acid sequence, 525 residues long: Bifunctional enzyme NanE/NanK (525 aa).

Positions methionine 1–serine 241 are manNAc-6-P epimerase. The tract at residues serine 242 to serine 525 is manNAc kinase. ATP-binding positions include alanine 246–lysine 253 and glycine 372–leucine 379.

In the N-terminal section; belongs to the NanE family. It in the C-terminal section; belongs to the ROK (NagC/XylR) family. NanK subfamily.

It catalyses the reaction an N-acyl-D-glucosamine 6-phosphate = an N-acyl-D-mannosamine 6-phosphate. It carries out the reaction an N-acyl-D-mannosamine + ATP = an N-acyl-D-mannosamine 6-phosphate + ADP + H(+). It functions in the pathway amino-sugar metabolism; N-acetylneuraminate degradation; D-fructose 6-phosphate from N-acetylneuraminate: step 2/5. Its pathway is amino-sugar metabolism; N-acetylneuraminate degradation; D-fructose 6-phosphate from N-acetylneuraminate: step 3/5. Converts N-acetylmannosamine-6-phosphate (ManNAc-6-P) to N-acetylglucosamine-6-phosphate (GlcNAc-6-P). Functionally, catalyzes the phosphorylation of N-acetylmannosamine (ManNAc) to ManNAc-6-P. This is Bifunctional enzyme NanE/NanK (nanEK) from Brucella suis biovar 1 (strain 1330).